We begin with the raw amino-acid sequence, 67 residues long: UPF0434 protein Bphy_0537 (67 aa).

This sequence belongs to the UPF0434 family.

This chain is UPF0434 protein Bphy_0537, found in Paraburkholderia phymatum (strain DSM 17167 / CIP 108236 / LMG 21445 / STM815) (Burkholderia phymatum).